The primary structure comprises 460 residues: Light-independent protochlorophyllide reductase subunit N (460 aa).

Residues Cys20, Cys45, and Cys105 each contribute to the [4Fe-4S] cluster site.

This sequence belongs to the BchN/ChlN family. As to quaternary structure, protochlorophyllide reductase is composed of three subunits; ChlL, ChlN and ChlB. Forms a heterotetramer of two ChlB and two ChlN subunits. Requires [4Fe-4S] cluster as cofactor.

It is found in the plastid. The protein localises to the chloroplast. The enzyme catalyses chlorophyllide a + oxidized 2[4Fe-4S]-[ferredoxin] + 2 ADP + 2 phosphate = protochlorophyllide a + reduced 2[4Fe-4S]-[ferredoxin] + 2 ATP + 2 H2O. Its pathway is porphyrin-containing compound metabolism; chlorophyll biosynthesis (light-independent). In terms of biological role, component of the dark-operative protochlorophyllide reductase (DPOR) that uses Mg-ATP and reduced ferredoxin to reduce ring D of protochlorophyllide (Pchlide) to form chlorophyllide a (Chlide). This reaction is light-independent. The NB-protein (ChlN-ChlB) is the catalytic component of the complex. The protein is Light-independent protochlorophyllide reductase subunit N of Adiantum capillus-veneris (Maidenhair fern).